The chain runs to 118 residues: Small ribosomal subunit protein uS13 (118 aa).

The disordered stretch occupies residues 92 to 118 (RRSLPVRGQRTKTNARTRKGPRKPIKK).

This sequence belongs to the universal ribosomal protein uS13 family. In terms of assembly, part of the 30S ribosomal subunit. Forms a loose heterodimer with protein S19. Forms two bridges to the 50S subunit in the 70S ribosome.

In terms of biological role, located at the top of the head of the 30S subunit, it contacts several helices of the 16S rRNA. In the 70S ribosome it contacts the 23S rRNA (bridge B1a) and protein L5 of the 50S subunit (bridge B1b), connecting the 2 subunits; these bridges are implicated in subunit movement. Contacts the tRNAs in the A and P-sites. The chain is Small ribosomal subunit protein uS13 from Acinetobacter baylyi (strain ATCC 33305 / BD413 / ADP1).